The sequence spans 730 residues: Polyphosphate kinase (730 aa).

A compositionally biased stretch (basic and acidic residues) spans 1–21 (MMRHDRNVTEIDAETRPDENL). Positions 1–39 (MMRHDRNVTEIDAETRPDENLWHSGDSAVGAPPAATPAA) are disordered. Asparagine 86 contacts ATP. Arginine 423 and arginine 453 together coordinate Mg(2+). Residue histidine 483 is the Phosphohistidine intermediate of the active site. ATP-binding residues include tyrosine 516, arginine 612, and histidine 640.

The protein belongs to the polyphosphate kinase 1 (PPK1) family. It depends on Mg(2+) as a cofactor. In terms of processing, an intermediate of this reaction is the autophosphorylated ppk in which a phosphate is covalently linked to a histidine residue through a N-P bond.

The catalysed reaction is [phosphate](n) + ATP = [phosphate](n+1) + ADP. In terms of biological role, catalyzes the reversible transfer of the terminal phosphate of ATP to form a long-chain polyphosphate (polyP). The protein is Polyphosphate kinase of Mycobacterium avium (strain 104).